A 388-amino-acid chain; its full sequence is MNLHEYQAKELLAGYGLPVQGGILARNGEEAAAAYDKLGGKFAVVKAQVHAGGRGKAGGVKVVKSREEAKEVAESLIGTNLVTYQTDANGQPVNSVLVCEDMYPVQTELYLGAVVDRSTRRITFMASTEGGVEIEKVAAETPEKIFKVTVDPLVGLQPCQAREVAFQLGLKDKQINEFVKLMTGAYKAFVDNDFALFEVNPLAVRENGALACVDGKIGIDSNALYRLPKIAELRDKSQENERELKASEFDLNYVALEGNIGCMVNGAGLAMATMDIIKLKGGQPANFLDVGGGATKDRVVEAFKLILEDKSVKGVLINIFGGIVRCDMIAEAIVAAVKEINVNVPVVVRLEGNNAELGAKILNESGLKLTSADGLNDAAEKIVAAVNA.

The region spanning 9–245 (KELLAGYGLP…KSQENERELK (237 aa)) is the ATP-grasp domain. ATP is bound by residues Lys46, 53–55 (GRG), Glu100, Tyr103, and Glu108. 2 residues coordinate Mg(2+): Asn200 and Asp214. Substrate-binding positions include Asn265 and 322 to 324 (GIV).

This sequence belongs to the succinate/malate CoA ligase beta subunit family. In terms of assembly, heterotetramer of two alpha and two beta subunits. Mg(2+) serves as cofactor.

It catalyses the reaction succinate + ATP + CoA = succinyl-CoA + ADP + phosphate. It carries out the reaction GTP + succinate + CoA = succinyl-CoA + GDP + phosphate. It participates in carbohydrate metabolism; tricarboxylic acid cycle; succinate from succinyl-CoA (ligase route): step 1/1. Succinyl-CoA synthetase functions in the citric acid cycle (TCA), coupling the hydrolysis of succinyl-CoA to the synthesis of either ATP or GTP and thus represents the only step of substrate-level phosphorylation in the TCA. The beta subunit provides nucleotide specificity of the enzyme and binds the substrate succinate, while the binding sites for coenzyme A and phosphate are found in the alpha subunit. This is Succinate--CoA ligase [ADP-forming] subunit beta from Neisseria meningitidis serogroup C (strain 053442).